The primary structure comprises 403 residues: Arginine biosynthesis bifunctional protein ArgJ (403 aa).

Residues T149, K175, T186, E272, N398, and T403 each contribute to the substrate site. The active-site Nucleophile is the T186.

The protein belongs to the ArgJ family. In terms of assembly, heterotetramer of two alpha and two beta chains.

It localises to the cytoplasm. It carries out the reaction N(2)-acetyl-L-ornithine + L-glutamate = N-acetyl-L-glutamate + L-ornithine. It catalyses the reaction L-glutamate + acetyl-CoA = N-acetyl-L-glutamate + CoA + H(+). It functions in the pathway amino-acid biosynthesis; L-arginine biosynthesis; L-ornithine and N-acetyl-L-glutamate from L-glutamate and N(2)-acetyl-L-ornithine (cyclic): step 1/1. The protein operates within amino-acid biosynthesis; L-arginine biosynthesis; N(2)-acetyl-L-ornithine from L-glutamate: step 1/4. Catalyzes two activities which are involved in the cyclic version of arginine biosynthesis: the synthesis of N-acetylglutamate from glutamate and acetyl-CoA as the acetyl donor, and of ornithine by transacetylation between N(2)-acetylornithine and glutamate. This is Arginine biosynthesis bifunctional protein ArgJ from Caldanaerobacter subterraneus subsp. tengcongensis (strain DSM 15242 / JCM 11007 / NBRC 100824 / MB4) (Thermoanaerobacter tengcongensis).